The primary structure comprises 494 residues: Serine/arginine-rich splicing factor 4 (494 aa).

The RRM 1 domain occupies 2 to 72; it reads PRVYIGRLSY…ERVIVEHARG (71 aa). Disordered regions lie at residues 72–95 and 169–494; these read GPRR…GRDK and KIRL…HSRS. 2 positions are modified to phosphoserine: S78 and S84. Positions 104–177 constitute an RRM 2 domain; the sequence is YRLIVENLSS…RKIRLVEDKP (74 aa). Composition is skewed to basic residues over residues 179 to 206 and 214 to 246; these read SRRR…KSRS and SHSK…KKEK. Basic and acidic residues predominate over residues 247 to 256; the sequence is SRSPSKEKSR. Over residues 257–267 the composition is skewed to basic residues; that stretch reads SRSHSAGKSRS. Residues 268-278 show a composition bias toward basic and acidic residues; sequence KSKDQAEEKIQ. Residues 286–302 show a composition bias toward basic residues; sequence PKSRSPSRHKSKSKSRS. S288, S290, and S292 each carry phosphoserine. Positions 303-327 are enriched in basic and acidic residues; that stretch reads RSQERRVEEEKRGSVSRGRSQEKSL. Basic residues-rich tracts occupy residues 328-359 and 367-382; these read RQSR…GRKR and RSRS…KRGS. A compositionally biased stretch (basic and acidic residues) spans 411 to 431; that stretch reads VSKEREHAKSESSQREGRGES. Phosphoserine occurs at positions 431, 446, 456, 458, and 460. Positions 449–460 are enriched in low complexity; it reads KSKPNLPSESRS. A compositionally biased stretch (basic residues) spans 461 to 494; that stretch reads RSKSASKTRSRSKSRSRSASRSPSRSRSRSHSRS.

The protein belongs to the splicing factor SR family. Found in a pre-mRNA splicing complex with SRSF4/SFRS4, SRSF5/SFRS5, SNRNP70, SNRPA1, SRRM1 and SRRM2. Interacts with PNN. Extensively phosphorylated on serine residues in the RS domain.

Its subcellular location is the nucleus speckle. Its function is as follows. Plays a role in alternative splice site selection during pre-mRNA splicing. Represses the splicing of MAPT/Tau exon 10. The protein is Serine/arginine-rich splicing factor 4 (SRSF4) of Homo sapiens (Human).